Consider the following 362-residue polypeptide: Probable secreted beta-glucosidase UTH1 (362 aa).

A signal peptide spans 1-17; the sequence is MKLSALLALSASTAVLA.

It belongs to the SUN family.

The protein localises to the mitochondrion outer membrane. It localises to the secreted. Its subcellular location is the cell wall. Its function is as follows. Involved in aging, oxidative stress response, and in the regulation of mitochondrial biogenesis. Inactivation of UTH1 increases life span, leads to higher resistance to heat stress and to hydrogen peroxide, and increases sensitivity to the superoxide radical-generating drug paraquat and to copper. Also required for the selective autophagic degradation of mitochondria (mitophagy) in response to nitrogen starvation. May play a role in cell wall morphogenesis and septation. Involved in the remodeling of the cell wall during the various phases of yeast culture development and under various environmental conditions and plays a role in septation. Involved in cell sensitivity to boric acid. The sequence is that of Probable secreted beta-glucosidase UTH1 (UTH1) from Saccharomyces cerevisiae (strain YJM789) (Baker's yeast).